The primary structure comprises 131 residues: D-ribose pyranase (131 aa).

The active-site Proton donor is histidine 20. Residues aspartate 28, histidine 98, and 120–122 (YSN) contribute to the substrate site.

This sequence belongs to the RbsD / FucU family. RbsD subfamily. Homodecamer.

It is found in the cytoplasm. It catalyses the reaction beta-D-ribopyranose = beta-D-ribofuranose. Its pathway is carbohydrate metabolism; D-ribose degradation; D-ribose 5-phosphate from beta-D-ribopyranose: step 1/2. Catalyzes the interconversion of beta-pyran and beta-furan forms of D-ribose. In Latilactobacillus sakei subsp. sakei (strain 23K) (Lactobacillus sakei subsp. sakei), this protein is D-ribose pyranase.